Here is a 399-residue protein sequence, read N- to C-terminus: Probable inactive 2-oxoglutarate-dependent dioxygenase AOP2 (399 aa).

One can recognise a Fe2OG dioxygenase domain in the interval 248-345 (GGDDVEANDD…RYTAAIFTCP (98 aa)). Residues H268, D270, and H325 each contribute to the Fe cation site. Residue R336 participates in 2-oxoglutarate binding.

It belongs to the iron/ascorbate-dependent oxidoreductase family. Fe(2+) is required as a cofactor.

The sequence is that of Probable inactive 2-oxoglutarate-dependent dioxygenase AOP2 (AOP2) from Arabidopsis thaliana (Mouse-ear cress).